Reading from the N-terminus, the 180-residue chain is CD-NTase/cGAS isopeptidase (180 aa).

Residues 33-165 (IVISSSTIEQ…AGSYSLSASV (133 aa)) enclose the MPN domain. The active-site Proton donor/acceptor is the Glu-54. The Zn(2+) site is built by His-115, His-117, and Asp-128.

The protein belongs to the peptidase M67B family. Cap3 isopeptidase subfamily.

Metalloprotease priming reversal component of a CBASS antivirus system. CBASS (cyclic oligonucleotide-based antiphage signaling system) provides immunity against bacteriophages. The CD-NTase protein (CdnD) synthesizes cyclic nucleotides in response to infection; these serve as specific second messenger signals. The signals activate a diverse range of effectors, leading to bacterial cell death and thus abortive phage infection. A type II-C(AAG) CBASS system. Functionally, reverses the primed state of DncV, the CD-NTase. Cleaves a CdnD-GFP (green fluorescent protein) fusion protein precisely at the C-terminus of CdnD. Overexpression decreases the efficacy of CBASS protection against phage T2. Antagonism of phage defense upon overexpression is CBASS-system specific, Cap3 from this bacteria only antagonizes its cognate CBASS system and not that of C.freundii, E.coli or V.cholerae. In terms of biological role, protects E.coli against phage T2 infection. When the cdnD-cap2-cap3-cap4 operon is introduced in E.coli there is a more than 10(3) decrease in the efficiency of T2 plaque formation. The operon does not protect against phage T5 and only about 10-fold against T7. This chain is CD-NTase/cGAS isopeptidase, found in Enterobacter hormaechei subsp. hoffmannii (strain UCI 50).